A 330-amino-acid polypeptide reads, in one-letter code: Aspartate--ammonia ligase (330 aa).

Belongs to the class-II aminoacyl-tRNA synthetase family. AsnA subfamily.

It is found in the cytoplasm. The catalysed reaction is L-aspartate + NH4(+) + ATP = L-asparagine + AMP + diphosphate + H(+). Its pathway is amino-acid biosynthesis; L-asparagine biosynthesis; L-asparagine from L-aspartate (ammonia route): step 1/1. The sequence is that of Aspartate--ammonia ligase from Streptococcus uberis (strain ATCC BAA-854 / 0140J).